The following is a 325-amino-acid chain: GMP reductase (325 aa).

Residue C174 is the Thioimidate intermediate of the active site. 203–226 (LIADGGIRTHGDIAKSIRFGASMV) contributes to the NADP(+) binding site.

This sequence belongs to the IMPDH/GMPR family. GuaC type 2 subfamily.

The catalysed reaction is IMP + NH4(+) + NADP(+) = GMP + NADPH + 2 H(+). In terms of biological role, catalyzes the irreversible NADPH-dependent deamination of GMP to IMP. It functions in the conversion of nucleobase, nucleoside and nucleotide derivatives of G to A nucleotides, and in maintaining the intracellular balance of A and G nucleotides. The sequence is that of GMP reductase from Staphylococcus aureus (strain bovine RF122 / ET3-1).